The sequence spans 515 residues: RNA-splicing ligase RtcB homolog (515 aa).

Mn(2+)-binding residues include aspartate 121, cysteine 124, histidine 229, histidine 269, and histidine 363. A GMP-binding site is contributed by 228 to 232 (NHYGE). GMP-binding positions include 363 to 364 (HN), 412 to 415 (GGTM), serine 419, 438 to 441 (HGSG), and lysine 514. The active-site GMP-histidine intermediate is the histidine 438.

This sequence belongs to the RtcB family. As to quaternary structure, catalytic component of the tRNA-splicing ligase complex. It depends on Mn(2+) as a cofactor.

It carries out the reaction a 3'-end 3'-phospho-ribonucleotide-RNA + a 5'-end dephospho-ribonucleoside-RNA + GTP = a ribonucleotidyl-ribonucleotide-RNA + GMP + diphosphate. The catalysed reaction is a 3'-end 2',3'-cyclophospho-ribonucleotide-RNA + a 5'-end dephospho-ribonucleoside-RNA + GTP + H2O = a ribonucleotidyl-ribonucleotide-RNA + GMP + diphosphate + H(+). Catalytic subunit of the tRNA-splicing ligase complex that acts by directly joining spliced tRNA halves to mature-sized tRNAs by incorporating the precursor-derived splice junction phosphate into the mature tRNA as a canonical 3',5'-phosphodiester. May act as an RNA ligase with broad substrate specificity, and may function toward other RNAs. The protein is RNA-splicing ligase RtcB homolog of Theileria annulata.